Consider the following 1156-residue polypeptide: DNA-directed RNA polymerase 133 kDa polypeptide (1156 aa).

This sequence belongs to the RNA polymerase beta chain family. In terms of assembly, the DNA-dependent RNA polymerase used for intermediate and late genes expression consists of eight subunits 147 kDa, 133 kDa, 35 kDa, 30 kDa, 22 kDa, 19 kDa, 18 kDa and 7 kDa totalling more than 500 kDa in mass. The same holoenzyme, with the addition of the transcription-specificity factor RAP94, is used for early gene expression.

It is found in the virion. It carries out the reaction RNA(n) + a ribonucleoside 5'-triphosphate = RNA(n+1) + diphosphate. Part of the DNA-dependent RNA polymerase which catalyzes the transcription of viral DNA into RNA using the four ribonucleoside triphosphates as substrates. Responsible for the transcription of early, intermediate and late genes. DNA-dependent RNA polymerase associates with the early transcription factor (ETF), itself composed of D6 and A7, thereby allowing the early genes transcription. Late transcription, and probably also intermediate transcription, require newly synthesized RNA polymerase. This chain is DNA-directed RNA polymerase 133 kDa polypeptide (RPO132), found in Homo sapiens (Human).